A 1765-amino-acid polypeptide reads, in one-letter code: Sodium channel protein type 11 subunit alpha (1765 aa).

Over 1-126 the chain is Cytoplasmic; it reads MEERYYPVIF…PLRSLMIRIS (126 aa). Residues 115 to 403 form an I repeat; sequence FNPLRSLMIR…VTMAYEEQNR (289 aa). Residues 127–148 traverse the membrane as a helical segment; the sequence is VHSVFSMFIICTVIINCMFMAN. Over 149–157 the chain is Extracellular; sequence SMERSFDND. The chain crosses the membrane as a helical span at residues 158-177; sequence IPEYVFIGIYILEAVIKILA. Over 178-189 the chain is Cytoplasmic; the sequence is RGFIVDEFSFLR. The chain crosses the membrane as a helical span at residues 190–209; the sequence is DPWNWLDFIVIGTAIATCFP. The Extracellular portion of the chain corresponds to 210-216; the sequence is GSQVNLS. N214 carries an N-linked (GlcNAc...) asparagine glycan. A helical; Voltage-sensor membrane pass occupies residues 217 to 236; the sequence is ALRTFRVFRALKAISVISGL. Topologically, residues 237-252 are cytoplasmic; that stretch reads KVIVGALLRSVKKLVD. A helical membrane pass occupies residues 253 to 266; sequence VMVLTLFCLSIFAL. Residues 267 to 339 are Extracellular-facing; that stretch reads VGQQLFMGIL…PDNNYTKFDN (73 aa). An intrachain disulfide couples C280 to C317. N319 and N333 each carry an N-linked (GlcNAc...) asparagine glycan. The segment at residues 340–364 is an intramembrane region (pore-forming); sequence FGWSFLAMFRVMTQDSWERLYRQIL. Residues 365–371 lie on the Extracellular side of the membrane; that stretch reads RTSGIYF. A helical transmembrane segment spans residues 372-397; the sequence is VFFFVVVIFLGSFYLLNLTLAVVTMA. Residues 398–567 are Cytoplasmic-facing; it reads YEEQNRNVAA…WLCIKKVLRT (170 aa). One copy of the II repeat lies at 554-820; it reads CSPQWLCIKK…EGETRKTKVQ (267 aa). Residues 568 to 591 form a helical membrane-spanning segment; the sequence is IMTDPFTELAITICIIINTVFLAV. The Extracellular portion of the chain corresponds to 592–602; sequence EHHNMDDNLKT. The helical transmembrane segment at 603-626 threads the bilayer; that stretch reads ILKIGNWVFTGIFIAEMCLKIIAL. At 627–634 the chain is on the cytoplasmic side; sequence DPYHYFRH. Residues 635-656 traverse the membrane as a helical segment; the sequence is GWNVFDSIVALLSLADVLYNTL. The Extracellular segment spans residues 657-662; that stretch reads SDNNRS. N660 carries an N-linked (GlcNAc...) asparagine glycan. Residues 663–682 form a helical; Voltage-sensor membrane-spanning segment; the sequence is FLASLRVLRVFKLAKSWPTL. At 683-697 the chain is on the cytoplasmic side; sequence NTLIKIIGHSVGALG. Residues 698 to 720 traverse the membrane as a helical segment; the sequence is NLTVVLTIVVFIFSVVGMRLFGT. Residues 721-741 lie on the Extracellular side of the membrane; that stretch reads KFNKTAYATQERPRRRWHMDN. N723 is a glycosylation site (N-linked (GlcNAc...) asparagine). An intramembrane region (pore-forming) is located at residues 742–762; sequence FYHSFLVVFRILCGEWIENMW. The Extracellular portion of the chain corresponds to 763–772; that stretch reads GCMQDMDGSP. Cysteines 764 and 774 form a disulfide. Residues 773-798 form a helical membrane-spanning segment; sequence LCIIVFVLIMVIGKLVVLNLFIALLL. The Cytoplasmic segment spans residues 799–1029; sequence NSFSNEEKDG…WWNIRKTCYQ (231 aa). One copy of the III repeat lies at 1022-1319; the sequence is NIRKTCYQIV…KKYYNAMKKL (298 aa). A helical membrane pass occupies residues 1030-1052; that stretch reads IVKHSWFESFIIFVILLSSGALI. The Extracellular segment spans residues 1053-1066; the sequence is FEDVNLPSRPQVEK. The helical transmembrane segment at 1067–1092 threads the bilayer; sequence LLRCTDNIFTFIFLLEMILKWVAFGF. The Cytoplasmic portion of the chain corresponds to 1093 to 1098; it reads RRYFTS. Residues 1099–1116 form a helical membrane-spanning segment; the sequence is AWCWLDFLIVVVSVLSLM. N1117 is a topological domain (extracellular). A helical; Voltage-sensor membrane pass occupies residues 1118–1139; it reads LPSLKSFRTLRALRPLRALSQF. At 1140–1158 the chain is on the cytoplasmic side; the sequence is EGMKVVVYALISAIPAILN. A helical transmembrane segment spans residues 1159–1180; it reads VLLVCLIFWLVFCILGVNLFSG. Topologically, residues 1181–1223 are extracellular; sequence KFGRCINGTDINMYLDFTEVPNRSQCNISNYSWKVPQVNFDNV. Residues N1187, N1202, N1207, and N1210 are each glycosylated (N-linked (GlcNAc...) asparagine). Positions 1224 to 1245 form an intramembrane region, pore-forming; sequence GNAYLALLQVATYKGWLEIMNA. Residues 1246–1261 lie on the Extracellular side of the membrane; the sequence is AVDSREKDEQPDFEAN. Residues 1262–1288 traverse the membrane as a helical segment; sequence LYAYLYFVVFIIFGSFFTLNLFIGVII. Residues 1289–1341 are Cytoplasmic-facing; that stretch reads DNFNQQQKKLGGQDIFMTEEQKKYYNAMKKLGTKKPQKPIPRPLNKCQAFVFD. An IV repeat occupies 1328-1619; that stretch reads IPRPLNKCQA…WEKFDPEASQ (292 aa). The helical transmembrane segment at 1342 to 1365 threads the bilayer; that stretch reads LVTSQVFDVIILGLIVLNMIIMMA. The Extracellular portion of the chain corresponds to 1366–1376; that stretch reads ESADQPKDVKK. A helical transmembrane segment spans residues 1377-1400; the sequence is TFDILNIAFVVIFTIECLIKVFAL. Topologically, residues 1401 to 1406 are cytoplasmic; sequence RQHYFT. Residues 1407–1430 form a helical membrane-spanning segment; it reads NGWNLFDCVVVVLSIISTLVSRLE. Residues 1431-1440 lie on the Extracellular side of the membrane; sequence DSDISFPPTL. A helical; Voltage-sensor transmembrane segment spans residues 1441–1463; sequence FRVVRLARIGRILRLVRAARGIR. At 1464-1478 the chain is on the cytoplasmic side; that stretch reads TLLFALMMSLPSLFN. The chain crosses the membrane as a helical span at residues 1479-1501; that stretch reads IGLLLFLVMFIYAIFGMSWFSKV. At 1502–1515 the chain is on the extracellular side; sequence KKGSGIDDIFNFET. The pore-forming intramembrane region spans 1516 to 1538; the sequence is FTGSMLCLFQITTSAGWDTLLNP. The Extracellular segment spans residues 1539-1559; the sequence is MLEAKEHCNSSSQDSCQQPQI. The N-linked (GlcNAc...) asparagine glycan is linked to N1547. The chain crosses the membrane as a helical span at residues 1560–1584; that stretch reads AVVYFVSYIIISFLIVVNMYIAVIL. The Cytoplasmic portion of the chain corresponds to 1585–1765; that stretch reads ENFNTATEES…DVAKVKVHND (181 aa).

The protein belongs to the sodium channel (TC 1.A.1.10) family. Nav1.9/SCN11A subfamily. As to quaternary structure, the voltage-resistant sodium channel consists of an ion conducting pore forming alpha-subunit regulated by one or more auxiliary subunits SCN1B, SCN2B and SCN3B. Expressed (at protein level) in myenteric sensory neurons. Expressed in small sensory neurons of the dorsal root ganglia (C-fiber neurons) and trigeminal ganglia.

Its subcellular location is the cell membrane. The enzyme catalyses Na(+)(in) = Na(+)(out). Activity is not sensitive to inhibition by tetrodotoxin. Its function is as follows. Sodium channel mediating the voltage-dependent sodium ion permeability of excitable membranes. Assuming opened or closed conformations in response to the voltage difference across the membrane, the protein forms a sodium-selective channel through which sodium ions may pass in accordance with their electrochemical gradient. Involved in membrane depolarization during action potential in nociceptors which function as key relay stations for the electrical transmission of pain signals from the periphery to the central nervous system. Also involved in rapid BDNF-evoked neuronal depolarization. The chain is Sodium channel protein type 11 subunit alpha from Rattus norvegicus (Rat).